Reading from the N-terminus, the 266-residue chain is uncharacterized protein (266 aa).

Residues 112 to 261 (LEKKIFISHS…KKWERIKAKF (150 aa)) enclose the TIR domain. Glu192 is an active-site residue.

The catalysed reaction is NAD(+) + H2O = ADP-D-ribose + nicotinamide + H(+). This is an uncharacterized protein from Bacillus subtilis (strain 168).